The sequence spans 793 residues: Probable phosphoketolase (793 aa).

Belongs to the XFP family. The cofactor is thiamine diphosphate.

The polypeptide is Probable phosphoketolase (Rhodopirellula baltica (strain DSM 10527 / NCIMB 13988 / SH1)).